A 268-amino-acid polypeptide reads, in one-letter code: Malonyl-[acyl-carrier protein] O-methyltransferase (268 aa).

It belongs to the methyltransferase superfamily.

The catalysed reaction is malonyl-[ACP] + S-adenosyl-L-methionine = malonyl-[ACP] methyl ester + S-adenosyl-L-homocysteine. The protein operates within cofactor biosynthesis; biotin biosynthesis. In terms of biological role, converts the free carboxyl group of a malonyl-thioester to its methyl ester by transfer of a methyl group from S-adenosyl-L-methionine (SAM). It allows to synthesize pimeloyl-ACP via the fatty acid synthetic pathway. This chain is Malonyl-[acyl-carrier protein] O-methyltransferase, found in Prosthecochloris aestuarii (strain DSM 271 / SK 413).